A 464-amino-acid chain; its full sequence is tRNA modification GTPase MnmE (464 aa).

Residues R27, E89, and R128 each coordinate (6S)-5-formyl-5,6,7,8-tetrahydrofolate. One can recognise a TrmE-type G domain in the interval 225–384 (GLATAIVGRP…LEETIAHLFF (160 aa)). N235 lines the K(+) pocket. GTP-binding positions include 235–240 (NVGKSS), 254–260 (TDVAGTT), and 279–282 (DTAG). Residue S239 participates in Mg(2+) binding. K(+)-binding residues include T254, V256, and T259. T260 serves as a coordination point for Mg(2+). (6S)-5-formyl-5,6,7,8-tetrahydrofolate is bound at residue K464.

The protein belongs to the TRAFAC class TrmE-Era-EngA-EngB-Septin-like GTPase superfamily. TrmE GTPase family. As to quaternary structure, homodimer. Heterotetramer of two MnmE and two MnmG subunits. K(+) serves as cofactor.

It localises to the cytoplasm. Its function is as follows. Exhibits a very high intrinsic GTPase hydrolysis rate. Involved in the addition of a carboxymethylaminomethyl (cmnm) group at the wobble position (U34) of certain tRNAs, forming tRNA-cmnm(5)s(2)U34. The chain is tRNA modification GTPase MnmE from Levilactobacillus brevis (strain ATCC 367 / BCRC 12310 / CIP 105137 / JCM 1170 / LMG 11437 / NCIMB 947 / NCTC 947) (Lactobacillus brevis).